Reading from the N-terminus, the 526-residue chain is Plant intracellular Ras-group-related LRR protein 5 (526 aa).

LRR repeat units lie at residues 229 to 252 (LSSL…IGGL), 253 to 275 (ISLT…IGDL), 276 to 297 (LNLV…SFNR), 298 to 321 (LIHL…IGSL), 323 to 344 (SLKK…ISGC), 346 to 367 (SMEE…VGKL), 368 to 390 (STLE…MSSM), 391 to 414 (ANLK…CYAK), 416 to 437 (LVKL…LIGN), 438 to 463 (LEKL…TLSN), and 465 to 484 (RVLQ…ITEK). Residues 485-492 (GAQAVVQY) carry the GVYW; degenerate motif.

Belongs to the SHOC2 family. Widely expressed but preferentially in roots.

Leucine-rich repeat protein that likely mediates protein interactions, possibly in the context of signal transduction. This chain is Plant intracellular Ras-group-related LRR protein 5 (PIRL5), found in Arabidopsis thaliana (Mouse-ear cress).